Here is a 202-residue protein sequence, read N- to C-terminus: Urease accessory protein UreF (202 aa).

The protein belongs to the UreF family. As to quaternary structure, ureD, UreF and UreG form a complex that acts as a GTP-hydrolysis-dependent molecular chaperone, activating the urease apoprotein by helping to assemble the nickel containing metallocenter of UreC. The UreE protein probably delivers the nickel.

Its subcellular location is the cytoplasm. Its function is as follows. Required for maturation of urease via the functional incorporation of the urease nickel metallocenter. This Sporosarcina pasteurii (Bacillus pasteurii) protein is Urease accessory protein UreF.